Here is a 474-residue protein sequence, read N- to C-terminus: ATP-dependent rRNA helicase RRP3 (474 aa).

Residues 1–10 (MPSMKRRKLS) show a composition bias toward basic residues. The disordered stretch occupies residues 1–43 (MPSMKRRKLSHTPPQGEAEDGFSDSETSQASLQETPGNDEKIE). Residues 24-36 (DSETSQASLQETP) are compositionally biased toward polar residues. Positions 48-76 (KSFKDLGIIDSLCEACDSLGYKAPTQIQA) match the Q motif motif. The Helicase ATP-binding domain occupies 79–250 (IPLALQGRDL…RASLSNPLRV (172 aa)). 92–99 (AETGSGKT) is an ATP binding site. The DEAD box signature appears at 198–201 (DEAD). Positions 278-422 (YLIYLLNEFP…EYKVEKEEVM (145 aa)) constitute a Helicase C-terminal domain. Residues 442–474 (LHENRGKKGATLRNRRIGKGAKRSRDEMDREEG) are disordered. A compositionally biased stretch (basic residues) spans 448–463 (KKGATLRNRRIGKGAK). Residues 464–474 (RSRDEMDREEG) are compositionally biased toward basic and acidic residues.

Belongs to the DEAD box helicase family. DDX47/RRP3 subfamily. In terms of assembly, interacts with the SSU processome.

It is found in the nucleus. The catalysed reaction is ATP + H2O = ADP + phosphate + H(+). Its function is as follows. ATP-dependent rRNA helicase required for pre-ribosomal RNA processing. Involved in the maturation of the 35S-pre-rRNA and to its cleavage to mature 18S rRNA. The protein is ATP-dependent rRNA helicase RRP3 of Coccidioides immitis (strain RS) (Valley fever fungus).